The chain runs to 680 residues: Conserved oligomeric Golgi complex subunit 6 (680 aa).

Positions 479 to 517 (HKSKKSGQLPRRSRTSSDSSQLTSVDALLSSSPSPPQNN) are disordered.

This sequence belongs to the COG6 family. Component of the conserved oligomeric Golgi complex which is composed of eight different subunits and is required for normal Golgi morphology and localization. Interacts with COG5, COG7 and COG8.

It localises to the golgi apparatus membrane. Its function is as follows. Required for normal Golgi function. The protein is Conserved oligomeric Golgi complex subunit 6 of Arabidopsis thaliana (Mouse-ear cress).